A 397-amino-acid chain; its full sequence is Arginine biosynthesis bifunctional protein ArgJ (397 aa).

6 residues coordinate substrate: T147, K173, T184, E270, N392, and T397. T184 (nucleophile) is an active-site residue.

Belongs to the ArgJ family. As to quaternary structure, heterotetramer of two alpha and two beta chains.

The protein localises to the cytoplasm. It catalyses the reaction N(2)-acetyl-L-ornithine + L-glutamate = N-acetyl-L-glutamate + L-ornithine. The catalysed reaction is L-glutamate + acetyl-CoA = N-acetyl-L-glutamate + CoA + H(+). It functions in the pathway amino-acid biosynthesis; L-arginine biosynthesis; L-ornithine and N-acetyl-L-glutamate from L-glutamate and N(2)-acetyl-L-ornithine (cyclic): step 1/1. Its pathway is amino-acid biosynthesis; L-arginine biosynthesis; N(2)-acetyl-L-ornithine from L-glutamate: step 1/4. Functionally, catalyzes two activities which are involved in the cyclic version of arginine biosynthesis: the synthesis of N-acetylglutamate from glutamate and acetyl-CoA as the acetyl donor, and of ornithine by transacetylation between N(2)-acetylornithine and glutamate. The polypeptide is Arginine biosynthesis bifunctional protein ArgJ (Streptococcus thermophilus (strain CNRZ 1066)).